The primary structure comprises 419 residues: Gamma-glutamyl phosphate reductase (419 aa).

This sequence belongs to the gamma-glutamyl phosphate reductase family.

It is found in the cytoplasm. The enzyme catalyses L-glutamate 5-semialdehyde + phosphate + NADP(+) = L-glutamyl 5-phosphate + NADPH + H(+). The protein operates within amino-acid biosynthesis; L-proline biosynthesis; L-glutamate 5-semialdehyde from L-glutamate: step 2/2. Catalyzes the NADPH-dependent reduction of L-glutamate 5-phosphate into L-glutamate 5-semialdehyde and phosphate. The product spontaneously undergoes cyclization to form 1-pyrroline-5-carboxylate. This is Gamma-glutamyl phosphate reductase from Marinomonas sp. (strain MWYL1).